A 96-amino-acid polypeptide reads, in one-letter code: Co-chaperonin GroES (96 aa).

This sequence belongs to the GroES chaperonin family. Heptamer of 7 subunits arranged in a ring. Interacts with the chaperonin GroEL.

Its subcellular location is the cytoplasm. Functionally, together with the chaperonin GroEL, plays an essential role in assisting protein folding. The GroEL-GroES system forms a nano-cage that allows encapsulation of the non-native substrate proteins and provides a physical environment optimized to promote and accelerate protein folding. GroES binds to the apical surface of the GroEL ring, thereby capping the opening of the GroEL channel. This chain is Co-chaperonin GroES, found in Caulobacter vibrioides (strain ATCC 19089 / CIP 103742 / CB 15) (Caulobacter crescentus).